The chain runs to 444 residues: Deoxyguanosinetriphosphate triphosphohydrolase-like protein (444 aa).

The interval methionine 1–glutamine 26 is disordered. In terms of domain architecture, HD spans arginine 59–alanine 250.

This sequence belongs to the dGTPase family. Type 2 subfamily.

This Shewanella sediminis (strain HAW-EB3) protein is Deoxyguanosinetriphosphate triphosphohydrolase-like protein.